Reading from the N-terminus, the 383-residue chain is MNSTSFSQLENHSVHYNLSEEKPSFFAFENDDCHLPLAVIFTLALAYGAVIILGVSGNLALILIILKQKEMRNVTNILIVNLSFSDLLVAIMCLPFTFVYTLMDHWIFGEIMCKLNPFVQCVSITVSIFSLVLIAVERHQLIINPRGWRPNNRHAYIGIAVIWVLAVASSLPFMIYQVLTDEPFQNVTLDAFKDKLVCFDQFPSDSHRLSYTTLLLVLQYFGPLCFIFICYFKIYIRLKRRNNMMDKMRDSKYRSSESKRINIMLLSIVVAFAVCWLPLTIFNTVFDWNHQIIATCNHNLLFLLCHLTAMISTCVNPIFYGFLNKNFQRDLQFFFNFCDFRSRDDDYETIAMSTMHTDVSKTSLKQASPLAFKKISCVENEKI.

At 1–34 the chain is on the extracellular side; it reads MNSTSFSQLENHSVHYNLSEEKPSFFAFENDDCH. Residues Asn2, Asn11, and Asn17 are each glycosylated (N-linked (GlcNAc...) asparagine). The helical transmembrane segment at 35 to 55 threads the bilayer; the sequence is LPLAVIFTLALAYGAVIILGV. Residues 56 to 87 lie on the Cytoplasmic side of the membrane; the sequence is SGNLALILIILKQKEMRNVTNILIVNLSFSDL. A helical membrane pass occupies residues 88 to 108; the sequence is LVAIMCLPFTFVYTLMDHWIF. The Extracellular segment spans residues 109-116; sequence GEIMCKLN. Residues Cys113 and Cys198 are joined by a disulfide bond. The chain crosses the membrane as a helical span at residues 117-137; the sequence is PFVQCVSITVSIFSLVLIAVE. Topologically, residues 138–154 are cytoplasmic; it reads RHQLIINPRGWRPNNRH. Residues 155–175 traverse the membrane as a helical segment; it reads AYIGIAVIWVLAVASSLPFMI. Topologically, residues 176 to 211 are extracellular; it reads YQVLTDEPFQNVTLDAFKDKLVCFDQFPSDSHRLSY. A helical transmembrane segment spans residues 212-232; that stretch reads TTLLLVLQYFGPLCFIFICYF. Residues 233-260 are Cytoplasmic-facing; it reads KIYIRLKRRNNMMDKMRDSKYRSSESKR. Residues 261 to 281 form a helical membrane-spanning segment; sequence INIMLLSIVVAFAVCWLPLTI. The Extracellular portion of the chain corresponds to 282–299; it reads FNTVFDWNHQIIATCNHN. A helical transmembrane segment spans residues 300–320; that stretch reads LLFLLCHLTAMISTCVNPIFY. The Cytoplasmic portion of the chain corresponds to 321–383; the sequence is GFLNKNFQRD…KISCVENEKI (63 aa). The S-palmitoyl cysteine moiety is linked to residue Cys338. A phosphoserine mark is found at Ser368 and Ser376.

The protein belongs to the G-protein coupled receptor 1 family.

It localises to the cell membrane. Functionally, receptor for neuropeptide Y and peptide YY. The sequence is that of Neuropeptide Y receptor type 1 (NPY1R) from Cavia porcellus (Guinea pig).